We begin with the raw amino-acid sequence, 115 residues long: MSMDNLVRIIEKDQIKDVPEFRPGDTVKVYVRFKEGNKERTQAFEGIVISMRGSGISKTFTVRRIGANGIGVERIFPLYAPIIEKIEVVRRGKVRRAKLYYLREVRGKVKIKERR.

Belongs to the bacterial ribosomal protein bL19 family.

This protein is located at the 30S-50S ribosomal subunit interface and may play a role in the structure and function of the aminoacyl-tRNA binding site. This is Large ribosomal subunit protein bL19 from Thermosipho africanus (strain TCF52B).